A 2329-amino-acid chain; its full sequence is Pre-mRNA-splicing factor 8 homolog (2329 aa).

The disordered stretch occupies residues 1–53 (MANYGGHPQTEPHAIPDSILEEKSRKWKQLQGKRYSEKKKFGMSDTQKEEMPP). Positions 34-53 (RYSEKKKFGMSDTQKEEMPP) are enriched in basic and acidic residues. A reverse transcriptase homology domain region spans residues 804-1295 (TTVHWLESRR…KIQTRIKIGL (492 aa)). Residues 1296-1570 (NSKMPSRFPP…TLKISLIQIF (275 aa)) form a linker region. The segment at 1506–1519 (MKFKKLTNAQRSGL) is important for branch point selection. The restriction endonuclease homology domain stretch occupies residues 1574–1745 (LWQKIHESVV…LRERIRKGLQ (172 aa)). An RNase H homology domain region spans residues 1760–2013 (NYGELFSNQI…ILGMEISAPS (254 aa)). The region spanning 2096–2227 (TYILPKNILK…LTAYKLTPSG (132 aa)) is the MPN domain.

As to quaternary structure, part of the U5 snRNP complex and of the U4/U6-U5 tri-snRNP complex.

Its subcellular location is the nucleus. Its function is as follows. Functions as a scaffold that mediates the ordered assembly of spliceosomal proteins and snRNAs. Required for the assembly of the U4/U6-U5 tri-snRNP complex. Functions as a scaffold that positions spliceosomal U2, U5 and U6 snRNAs at splice sites on pre-mRNA substrates, so that splicing can occur. Interacts with both the 5' and the 3' splice site. The protein is Pre-mRNA-splicing factor 8 homolog (prp-8) of Caenorhabditis elegans.